A 394-amino-acid polypeptide reads, in one-letter code: Elongation factor Tu (394 aa).

In terms of domain architecture, tr-type G spans 10-204 (KPHVNVGTIG…AMDDYIPAPE (195 aa)). Residues 19–26 (GHVDHGKT) form a G1 region. A GTP-binding site is contributed by 19 to 26 (GHVDHGKT). Thr-26 serves as a coordination point for Mg(2+). A G2 region spans residues 60-64 (GITIN). The G3 stretch occupies residues 81-84 (DCPG). GTP is bound by residues 81–85 (DCPGH) and 136–139 (NKCD). A G4 region spans residues 136–139 (NKCD). A G5 region spans residues 174 to 176 (SAL).

This sequence belongs to the TRAFAC class translation factor GTPase superfamily. Classic translation factor GTPase family. EF-Tu/EF-1A subfamily. As to quaternary structure, monomer.

The protein localises to the cytoplasm. The enzyme catalyses GTP + H2O = GDP + phosphate + H(+). Its function is as follows. GTP hydrolase that promotes the GTP-dependent binding of aminoacyl-tRNA to the A-site of ribosomes during protein biosynthesis. The chain is Elongation factor Tu from Francisella tularensis subsp. holarctica (strain FTNF002-00 / FTA).